We begin with the raw amino-acid sequence, 658 residues long: Threonine--tRNA ligase (658 aa).

The 63-residue stretch at 1–63 (MDQITITFPD…DDNASIDFVA (63 aa)) folds into the TGS domain. The interval 245–548 (DHRKLGRELD…LIEHYAGNFP (304 aa)) is catalytic. Zn(2+) contacts are provided by Cys-341, His-392, and His-525.

Belongs to the class-II aminoacyl-tRNA synthetase family. Homodimer. Zn(2+) serves as cofactor.

The protein localises to the cytoplasm. The catalysed reaction is tRNA(Thr) + L-threonine + ATP = L-threonyl-tRNA(Thr) + AMP + diphosphate + H(+). Its function is as follows. Catalyzes the attachment of threonine to tRNA(Thr) in a two-step reaction: L-threonine is first activated by ATP to form Thr-AMP and then transferred to the acceptor end of tRNA(Thr). Also edits incorrectly charged L-seryl-tRNA(Thr). The chain is Threonine--tRNA ligase from Rhodopseudomonas palustris (strain ATCC BAA-98 / CGA009).